Consider the following 397-residue polypeptide: CCA-adding enzyme (397 aa).

Gly-26 and Arg-29 together coordinate ATP. Residues Gly-26 and Arg-29 each coordinate CTP. Asp-39 and Asp-41 together coordinate Mg(2+). Positions 110, 153, 156, 159, and 162 each coordinate ATP. CTP-binding residues include Arg-110, Asp-153, Arg-156, Arg-159, and Arg-162.

Belongs to the tRNA nucleotidyltransferase/poly(A) polymerase family. Bacterial CCA-adding enzyme type 3 subfamily. In terms of assembly, homodimer. The cofactor is Mg(2+).

The enzyme catalyses a tRNA precursor + 2 CTP + ATP = a tRNA with a 3' CCA end + 3 diphosphate. The catalysed reaction is a tRNA with a 3' CCA end + 2 CTP + ATP = a tRNA with a 3' CCACCA end + 3 diphosphate. In terms of biological role, catalyzes the addition and repair of the essential 3'-terminal CCA sequence in tRNAs without using a nucleic acid template. Adds these three nucleotides in the order of C, C, and A to the tRNA nucleotide-73, using CTP and ATP as substrates and producing inorganic pyrophosphate. tRNA 3'-terminal CCA addition is required both for tRNA processing and repair. Also involved in tRNA surveillance by mediating tandem CCA addition to generate a CCACCA at the 3' terminus of unstable tRNAs. While stable tRNAs receive only 3'-terminal CCA, unstable tRNAs are marked with CCACCA and rapidly degraded. This Bacillus cytotoxicus (strain DSM 22905 / CIP 110041 / 391-98 / NVH 391-98) protein is CCA-adding enzyme.